The sequence spans 164 residues: Transcription elongation factor GreA (164 aa).

The stretch at 50 to 76 (YHAAREEQGQQEARIRQLQELLNNAKV) forms a coiled coil.

Belongs to the GreA/GreB family.

In terms of biological role, necessary for efficient RNA polymerase transcription elongation past template-encoded arresting sites. The arresting sites in DNA have the property of trapping a certain fraction of elongating RNA polymerases that pass through, resulting in locked ternary complexes. Cleavage of the nascent transcript by cleavage factors such as GreA or GreB allows the resumption of elongation from the new 3'terminus. GreA releases sequences of 2 to 3 nucleotides. This is Transcription elongation factor GreA from Mycobacteroides abscessus (strain ATCC 19977 / DSM 44196 / CCUG 20993 / CIP 104536 / JCM 13569 / NCTC 13031 / TMC 1543 / L948) (Mycobacterium abscessus).